The chain runs to 457 residues: Metacaspase-1 (457 aa).

The disordered stretch occupies residues 1–149 (MSWNQYPGGG…PQLQGQGGQS (149 aa)). A compositionally biased stretch (gly residues) spans 7-18 (PGGGHHQQGGYG). Pro residues predominate over residues 20–56 (RPPPPQWAQQGPPPPPNMGYRPPPPPQAYYNNPPPPQ). Residues 57 to 83 (QYQRPAPQQNGYQQGGYQQQQQSQGNY) are compositionally biased toward low complexity. Residues His-247 and Cys-303 contribute to the active site.

The protein belongs to the peptidase C14B family.

Functionally, involved in cell death (apoptosis). The polypeptide is Metacaspase-1 (MCA1) (Cryptococcus neoformans var. neoformans serotype D (strain JEC21 / ATCC MYA-565) (Filobasidiella neoformans)).